A 104-amino-acid chain; its full sequence is L-rhamnose mutarotase (104 aa).

Y18 provides a ligand contact to substrate. H22 (proton donor) is an active-site residue. Residues Y41 and 76-77 (WW) contribute to the substrate site.

The protein belongs to the rhamnose mutarotase family. In terms of assembly, homodimer.

It is found in the cytoplasm. The enzyme catalyses alpha-L-rhamnose = beta-L-rhamnose. It functions in the pathway carbohydrate metabolism; L-rhamnose metabolism. Its function is as follows. Involved in the anomeric conversion of L-rhamnose. The protein is L-rhamnose mutarotase of Escherichia coli (strain K12 / MC4100 / BW2952).